We begin with the raw amino-acid sequence, 200 residues long: Small ribosomal subunit protein uS4 (200 aa).

A disordered region spans residues 22-42; the sequence is TGKELEKRPYAPGPHGPGQRK. The 64-residue stretch at 92–155 folds into the S4 RNA-binding domain; that stretch reads ARLDNVVYKL…RNLSIIKESV (64 aa).

This sequence belongs to the universal ribosomal protein uS4 family. In terms of assembly, part of the 30S ribosomal subunit. Contacts protein S5. The interaction surface between S4 and S5 is involved in control of translational fidelity.

Its function is as follows. One of the primary rRNA binding proteins, it binds directly to 16S rRNA where it nucleates assembly of the body of the 30S subunit. With S5 and S12 plays an important role in translational accuracy. The protein is Small ribosomal subunit protein uS4 of Bacillus velezensis (strain DSM 23117 / BGSC 10A6 / LMG 26770 / FZB42) (Bacillus amyloliquefaciens subsp. plantarum).